Reading from the N-terminus, the 124-residue chain is Secretion system apparatus protein SsaP (124 aa).

The protein is Secretion system apparatus protein SsaP (ssaP) of Salmonella typhi.